The following is a 126-amino-acid chain: Thioredoxin H-type 1 (126 aa).

The Thioredoxin domain maps to 2 to 120 (AANDATSSEE…LQQTIVKHAA (119 aa)). Active-site nucleophile residues include Cys46 and Cys49. The cysteines at positions 46 and 49 are disulfide-linked.

This sequence belongs to the thioredoxin family. Plant H-type subfamily.

The protein resides in the cytoplasm. Functionally, participates in various redox reactions through the reversible oxidation of the active center dithiol to a disulfide. The H form is known to activate a number of cytosolic enzymes. The polypeptide is Thioredoxin H-type 1 (Nicotiana tabacum (Common tobacco)).